The following is a 95-amino-acid chain: Putative protein RDUR (95 aa).

Residues 1 to 12 show a composition bias toward basic and acidic residues; the sequence is MNNSFNKEDRMS. The disordered stretch occupies residues 1 to 20; sequence MNNSFNKEDRMSSDTMVGSC.

Its function is as follows. Could play a role in innate immunity against viruses. This Homo sapiens (Human) protein is Putative protein RDUR.